We begin with the raw amino-acid sequence, 125 residues long: Small ribosomal subunit protein uS13 (125 aa).

Residues 95-125 are disordered; sequence GLPLRGQRTKTNARTRKGKRKTVANKKIASK.

This sequence belongs to the universal ribosomal protein uS13 family. As to quaternary structure, part of the 30S ribosomal subunit. Forms a loose heterodimer with protein S19. Forms two bridges to the 50S subunit in the 70S ribosome.

Its function is as follows. Located at the top of the head of the 30S subunit, it contacts several helices of the 16S rRNA. In the 70S ribosome it contacts the 23S rRNA (bridge B1a) and protein L5 of the 50S subunit (bridge B1b), connecting the 2 subunits; these bridges are implicated in subunit movement. Contacts the tRNAs in the A and P-sites. The chain is Small ribosomal subunit protein uS13 from Borreliella burgdorferi (strain ATCC 35210 / DSM 4680 / CIP 102532 / B31) (Borrelia burgdorferi).